The following is a 363-amino-acid chain: Crh-like protein 3 (363 aa).

The signal sequence occupies residues 1–19 (MSLLYLVALFVASICSVTA). Cys25 and Cys32 are disulfide-bonded. One can recognise a GH16 domain in the interval 26 to 237 (NPLTTTCPPD…YSKAPFTMVL (212 aa)). N-linked (GlcNAc...) asparagine glycans are attached at residues Asn41, Asn47, and Asn56. Glu118 acts as the Nucleophile in catalysis. The Proton donor role is filled by Glu122. Glu122 contacts chitin. 3 N-linked (GlcNAc...) asparagine glycosylation sites follow: Asn127, Asn141, and Asn161. Chitin is bound by residues Arg203, Trp207, and Thr218. 2 N-linked (GlcNAc...) asparagine glycosylation sites follow: Asn252 and Asn269. The chain crosses the membrane as a helical span at residues 298–318 (VYIGAGCVGAALLAGFIFFFI).

Belongs to the glycosyl hydrolase 16 family. CRH1 subfamily. The GPI-like anchor contains a phosphoceramide lipid group. The anchor position has not been determined.

The protein localises to the cell membrane. It is found in the secreted. Its subcellular location is the cell wall. The enzyme catalyses Random endo-hydrolysis of N-acetyl-beta-D-glucosaminide (1-&gt;4)-beta-linkages in chitin and chitodextrins.. Its function is as follows. Dual chitinase/transglycosylase that plays a role in cell wall architecture. Chitinase and transglycosylase activities are coupled. Required for the polysaccharide cross-linking at the septa and the cell wall. More specifically, transfers chitin to 1,6-beta-glucan in the cell wall. The polypeptide is Crh-like protein 3 (Aspergillus fumigatus (strain ATCC MYA-4609 / CBS 101355 / FGSC A1100 / Af293) (Neosartorya fumigata)).